The primary structure comprises 174 residues: Probable N-acetyltransferase Rv2775 (174 aa).

One can recognise an N-acetyltransferase domain in the interval 6–172 (IRIRAAKPID…VGYRLYRSAP (167 aa)).

Belongs to the acetyltransferase family.

This Mycobacterium tuberculosis (strain ATCC 25618 / H37Rv) protein is Probable N-acetyltransferase Rv2775.